The primary structure comprises 142 residues: MAKKVQAYVKLQVAAGMANPSPPVGPALGQQGVNIMEFCKAFNAKTESIEKGLPTPVVITVYSDRSFTFVTKTPPAAVLLKKAAGIKSGSGKPNKDKVGKVTSAQVREIAETKAADMTGSDVDAMVRSIAGTARSMGLVVED.

Belongs to the universal ribosomal protein uL11 family. In terms of assembly, part of the ribosomal stalk of the 50S ribosomal subunit. Interacts with L10 and the large rRNA to form the base of the stalk. L10 forms an elongated spine to which L12 dimers bind in a sequential fashion forming a multimeric L10(L12)X complex. One or more lysine residues are methylated.

Forms part of the ribosomal stalk which helps the ribosome interact with GTP-bound translation factors. The polypeptide is Large ribosomal subunit protein uL11 (Pectobacterium atrosepticum (strain SCRI 1043 / ATCC BAA-672) (Erwinia carotovora subsp. atroseptica)).